The following is a 609-amino-acid chain: Sodium- and chloride-dependent GABA transporter 2 (609 aa).

A compositionally biased stretch (polar residues) spans 1 to 13 (MDSRASGTASNGE). The tract at residues 1 to 23 (MDSRASGTASNGETKPVYPVMEK) is disordered. Over 1-40 (MDSRASGTASNGETKPVYPVMEKEEEEGTLERGHWNNKME) the chain is Cytoplasmic. Helical transmembrane passes span 41–61 (FVLS…FPYL), 68–88 (GAFF…VFLL), and 121–141 (IVIL…FYLF). Residues 142 to 206 (SSFTIDLPWG…GIQHLGALRW (65 aa)) lie on the Extracellular side of the membrane. An intrachain disulfide couples Cys-153 to Cys-162. N-linked (GlcNAc...) asparagine glycans are attached at residues Asn-169 and Asn-173. 2 helical membrane-spanning segments follow: residues 207–227 (ELAL…WKGV) and 233–253 (VVYF…IRGV). N-linked (GlcNAc...) asparagine glycosylation is present at Asn-269. The next 7 membrane-spanning stretches (helical) occupy residues 282–302 (AGTQ…ALGS), 319–339 (FLNS…LGFM), 366–386 (VVML…VVLL), 418–438 (VLIL…LTEG), 453–473 (GMCL…VYGA), 490–510 (PLIK…TFLF), and 528–548 (WWGD…IPAW). The Cytoplasmic segment spans residues 549-609 (SLYRLGTLKG…LRLTELESHC (61 aa)). Residue Thr-594 is modified to Phosphothreonine. Residue Ser-598 is modified to Phosphoserine.

It belongs to the sodium:neurotransmitter symporter (SNF) (TC 2.A.22) family. SLC6A13 subfamily.

It localises to the cell membrane. The protein resides in the basolateral cell membrane. The catalysed reaction is 4-aminobutanoate(out) + chloride(out) + 2 Na(+)(out) = 4-aminobutanoate(in) + chloride(in) + 2 Na(+)(in). It catalyses the reaction taurine(out) + chloride(out) + 2 Na(+)(out) = taurine(in) + chloride(in) + 2 Na(+)(in). The enzyme catalyses beta-alanine(out) + chloride(out) + 2 Na(+)(out) = beta-alanine(in) + chloride(in) + 2 Na(+)(in). It carries out the reaction hypotaurine(out) + chloride(out) + 2 Na(+)(out) = hypotaurine(in) + chloride(in) + 2 Na(+)(in). Functionally, mediates sodium- and chloride-dependent transport of gamma-aminobutyric acid (GABA). Can also mediate transport of beta-alanine, taurine and hypotaurine. This chain is Sodium- and chloride-dependent GABA transporter 2 (SLC6A13), found in Macaca fascicularis (Crab-eating macaque).